A 196-amino-acid chain; its full sequence is ATP-dependent Clp protease proteolytic subunit (196 aa).

Ser96 acts as the Nucleophile in catalysis. His121 is an active-site residue.

This sequence belongs to the peptidase S14 family. In terms of assembly, fourteen ClpP subunits assemble into 2 heptameric rings which stack back to back to give a disk-like structure with a central cavity, resembling the structure of eukaryotic proteasomes.

The protein resides in the cytoplasm. It carries out the reaction Hydrolysis of proteins to small peptides in the presence of ATP and magnesium. alpha-casein is the usual test substrate. In the absence of ATP, only oligopeptides shorter than five residues are hydrolyzed (such as succinyl-Leu-Tyr-|-NHMec, and Leu-Tyr-Leu-|-Tyr-Trp, in which cleavage of the -Tyr-|-Leu- and -Tyr-|-Trp bonds also occurs).. In terms of biological role, cleaves peptides in various proteins in a process that requires ATP hydrolysis. Has a chymotrypsin-like activity. Plays a major role in the degradation of misfolded proteins. The protein is ATP-dependent Clp protease proteolytic subunit of Streptococcus pneumoniae (strain ATCC 700669 / Spain 23F-1).